The primary structure comprises 374 residues: Alginate lyase (374 aa).

A signal peptide spans 1-26 (MRNPKLKNLLAPTLLSLAMFAGATQA). Residues 67–68 (SK), 140–141 (HT), and Tyr258 each bind substrate.

The protein belongs to the polysaccharide lyase 5 family.

Its subcellular location is the periplasm. It carries out the reaction Eliminative cleavage of alginate to give oligosaccharides with 4-deoxy-alpha-L-erythro-hex-4-enuronosyl groups at their non-reducing ends and beta-D-mannuronate at their reducing end.. Catalyzes the depolymerization of alginate by cleaving the beta-1,4 glycosidic bond between two adjacent sugar residues via a beta-elimination mechanism. May serve to degrade mislocalized alginate that is trapped in the periplasmic space. The polypeptide is Alginate lyase (Cobetia marina (Deleya marina)).